A 101-amino-acid chain; its full sequence is Urease subunit beta (101 aa).

The protein belongs to the urease beta subunit family. As to quaternary structure, heterotrimer of UreA (gamma), UreB (beta) and UreC (alpha) subunits. Three heterotrimers associate to form the active enzyme.

The protein resides in the cytoplasm. The catalysed reaction is urea + 2 H2O + H(+) = hydrogencarbonate + 2 NH4(+). Its pathway is nitrogen metabolism; urea degradation; CO(2) and NH(3) from urea (urease route): step 1/1. The sequence is that of Urease subunit beta from Burkholderia orbicola (strain MC0-3).